A 430-amino-acid chain; its full sequence is Glutamate-1-semialdehyde 2,1-aminomutase (430 aa).

The residue at position 268 (Lys-268) is an N6-(pyridoxal phosphate)lysine.

This sequence belongs to the class-III pyridoxal-phosphate-dependent aminotransferase family. HemL subfamily. Pyridoxal 5'-phosphate serves as cofactor.

The protein resides in the cytoplasm. The catalysed reaction is (S)-4-amino-5-oxopentanoate = 5-aminolevulinate. It functions in the pathway porphyrin-containing compound metabolism; protoporphyrin-IX biosynthesis; 5-aminolevulinate from L-glutamyl-tRNA(Glu): step 2/2. This Methanopyrus kandleri (strain AV19 / DSM 6324 / JCM 9639 / NBRC 100938) protein is Glutamate-1-semialdehyde 2,1-aminomutase.